The chain runs to 467 residues: MQNPQNPPPAGSAADFYSQMPVKVMGTPGAPGSQSTPGAPGAPGQYPPQQPGAPGSNLPPYPGTQQPGAPGAPGQYPPQQPGQYPPQQPGAPGQYPPQQPGQPGYPPQQPGQSGQYPPQQPGQPGYPPQQPGAPGQYPPQQGQPGQYPPQQPGQPGQYPPQQQGQYPPQQPGQPGAYPPQQSGQPGAYPPQQGVQNTLAKTGAPGQPGVPPPQGAYPGQPGVPPQQGAYPGQQPPMGAYPPQGQPGAYPPQGQPGAYPPQQQQVAYPGQQPPMGAYPPQQGAYPGQQGAYPGQQGAYPGQQGAYPGQPPMGAYPGQQQYGVSAYSQTTAAYQTGAYPGQTPMGVYPGQTTAYAAYQTTAIGYGATSTYSYTRPTYSYATPYSRTAAFVVPVGLPPHVVQKMMAASAAFRIHDSNCSGTLSKKEFKKLIKHLGYYFSKGQTKMLFHSIDRDYSGSLSEREFVDWWSMQ.

Pro residues-rich tracts occupy residues 1–10 and 45–62; these read MQNPQNPPPA and QYPP…PPYP. Positions 1–311 are disordered; the sequence is MQNPQNPPPA…GAYPGQPPMG (311 aa). Residues 45-49 carry the XYPPX motif; it reads QYPPQ. A compositionally biased stretch (low complexity) spans 63–74; that stretch reads GTQQPGAPGAPG. Short sequence motifs (XYPPX) lie at residues 75–79, 83–87, 94–98, 104–108, 115–119, 125–129, 136–140, 146–150, 157–161, 165–169, 176–180, 187–191, 221–225, 238–242, 247–251, 256–260, and 275–279; these read QYPPQ, GYPPQ, AYPPQ, and GVPPQ. Composition is skewed to pro residues over residues 75 to 109 and 118 to 131; these read QYPP…PPQQ and PQQP…PQQP. Over residues 132–145 the composition is skewed to low complexity; the sequence is GAPGQYPPQQGQPG. Low complexity-rich tracts occupy residues 153–193 and 215–246; these read GQPG…PQQG and AYPG…GQPG. The span at 253 to 311 shows a compositional bias: low complexity; sequence QPGAYPPQQQQVAYPGQQPPMGAYPPQQGAYPGQQGAYPGQQGAYPGQQGAYPGQPPMG. 2 EF-hand domains span residues 399 to 434 and 435 to 467; these read QKMM…LGYY and FSKG…WSMQ. The Ca(2+) site is built by Asp412, Asn414, Ser416, Thr418, and Glu423.

The chain is Calcium-binding protein P (cbpP) from Dictyostelium discoideum (Social amoeba).